Reading from the N-terminus, the 436-residue chain is Protein GOLM2 (436 aa).

N-acetylmethionine is present on Met-1. The Cytoplasmic segment spans residues 1 to 14; that stretch reads MVGFGANRRAGRLP. Residues 15-35 form a helical; Signal-anchor for type II membrane protein membrane-spanning segment; that stretch reads SLVLVVLLVVIVVLAFNYWSI. The stretch at 35–195 forms a coiled coil; that stretch reads ISSRHVLLQE…QFLQEQKQEA (161 aa). Over 36–436 the chain is Lumenal; the sequence is SSRHVLLQEE…YGKQHFNDVL (401 aa). 2 stretches are compositionally biased toward basic and acidic residues: residues 193 to 207 and 224 to 247; these read QEAH…KELD and VADK…KRGG. Positions 193–436 are disordered; it reads QEAHKIQSND…YGKQHFNDVL (244 aa). Ser-233 and Ser-275 each carry phosphoserine. Composition is skewed to polar residues over residues 275–295 and 305–321; these read SVSQ…QPLS and NHNG…SSPL. Phosphoserine occurs at positions 328 and 332. Over residues 344–362 the composition is skewed to basic and acidic residues; it reads ATKDRVSDFHKLKQSRFFD. Ser-366 carries the post-translational modification Phosphoserine. Residues 399–418 are compositionally biased toward acidic residues; it reads YNEEEDGDGGEEDVQDDEER. Positions 426–436 are enriched in basic and acidic residues; sequence DYGKQHFNDVL.

Belongs to the GOLM family.

The protein localises to the membrane. The sequence is that of Protein GOLM2 (GOLM2) from Pongo abelii (Sumatran orangutan).